Consider the following 218-residue polypeptide: Large ribosomal subunit protein uL2c (218 aa).

A disordered region spans residues 165–192 (GVVKNPVDHPHGGGEGRSPIGRSHPVTP).

This sequence belongs to the universal ribosomal protein uL2 family. As to quaternary structure, part of the 50S ribosomal subunit.

The protein localises to the plastid. It is found in the chloroplast. The protein is Large ribosomal subunit protein uL2c (rpl2) of Bigelowiella natans (Pedinomonas minutissima).